Here is a 481-residue protein sequence, read N- to C-terminus: uncharacterized protein (481 aa).

To M.tuberculosis RV2411c.

This is an uncharacterized protein from Synechocystis sp. (strain ATCC 27184 / PCC 6803 / Kazusa).